Here is a 223-residue protein sequence, read N- to C-terminus: Deoxyribose-phosphate aldolase (223 aa).

D89 (proton donor/acceptor) is an active-site residue. K152 (schiff-base intermediate with acetaldehyde) is an active-site residue. The active-site Proton donor/acceptor is K181.

Belongs to the DeoC/FbaB aldolase family. DeoC type 1 subfamily.

The protein resides in the cytoplasm. It catalyses the reaction 2-deoxy-D-ribose 5-phosphate = D-glyceraldehyde 3-phosphate + acetaldehyde. It functions in the pathway carbohydrate degradation; 2-deoxy-D-ribose 1-phosphate degradation; D-glyceraldehyde 3-phosphate and acetaldehyde from 2-deoxy-alpha-D-ribose 1-phosphate: step 2/2. In terms of biological role, catalyzes a reversible aldol reaction between acetaldehyde and D-glyceraldehyde 3-phosphate to generate 2-deoxy-D-ribose 5-phosphate. In Bacillus cereus (strain ATCC 10987 / NRS 248), this protein is Deoxyribose-phosphate aldolase.